A 264-amino-acid chain; its full sequence is S-adenosylmethionine decarboxylase proenzyme (264 aa).

Residue Ser-113 is the Schiff-base intermediate with substrate; via pyruvic acid of the active site. Ser-113 is subject to Pyruvic acid (Ser); by autocatalysis. His-118 acts as the Proton acceptor; for processing activity in catalysis. Cys-141 (proton donor; for catalytic activity) is an active-site residue.

This sequence belongs to the prokaryotic AdoMetDC family. Type 2 subfamily. In terms of assembly, heterooctamer of four alpha and four beta chains arranged as a tetramer of alpha/beta heterodimers. It depends on pyruvate as a cofactor. In terms of processing, is synthesized initially as an inactive proenzyme. Formation of the active enzyme involves a self-maturation process in which the active site pyruvoyl group is generated from an internal serine residue via an autocatalytic post-translational modification. Two non-identical subunits are generated from the proenzyme in this reaction, and the pyruvate is formed at the N-terminus of the alpha chain, which is derived from the carboxyl end of the proenzyme. The post-translation cleavage follows an unusual pathway, termed non-hydrolytic serinolysis, in which the side chain hydroxyl group of the serine supplies its oxygen atom to form the C-terminus of the beta chain, while the remainder of the serine residue undergoes an oxidative deamination to produce ammonia and the pyruvoyl group blocking the N-terminus of the alpha chain.

The enzyme catalyses S-adenosyl-L-methionine + H(+) = S-adenosyl 3-(methylsulfanyl)propylamine + CO2. It participates in amine and polyamine biosynthesis; S-adenosylmethioninamine biosynthesis; S-adenosylmethioninamine from S-adenosyl-L-methionine: step 1/1. Catalyzes the decarboxylation of S-adenosylmethionine to S-adenosylmethioninamine (dcAdoMet), the propylamine donor required for the synthesis of the polyamines spermine and spermidine from the diamine putrescine. The chain is S-adenosylmethionine decarboxylase proenzyme from Xanthomonas campestris pv. campestris (strain B100).